We begin with the raw amino-acid sequence, 257 residues long: Cytochrome b561 domain-containing protein At2g30890 (257 aa).

An N-terminal signal peptide occupies residues 1–21 (MEIHHQLLVSLLFLLLPLCSS). A Cytochrome b561 domain is found at 22 to 219 (QENTRSLAID…LFQDKWSYIQ (198 aa)). Helical transmembrane passes span 55–75 (VHGFMLWAAMGVLMPIGIISI), 91–111 (LFFLHVTSQMVAVILVTIGAV), 125–145 (HQQLGIGLYVIVWFQALLGFL), 157–177 (WFVGHWILGTSIAILGIINIY), and 191–211 (ANLWTILFTAQLSCIALVYLF). 4 residues coordinate heme b: His56, His95, His125, and His161. The interval 235 to 257 (NISTAETGHGYEVEESKPELEKC) is disordered. Positions 243–257 (HGYEVEESKPELEKC) are enriched in basic and acidic residues.

Heme b serves as cofactor.

The protein localises to the membrane. The polypeptide is Cytochrome b561 domain-containing protein At2g30890 (Arabidopsis thaliana (Mouse-ear cress)).